The chain runs to 271 residues: Ribosomal RNA small subunit methyltransferase A (271 aa).

Positions 20, 45, 66, 90, and 112 each coordinate S-adenosyl-L-methionine.

It belongs to the class I-like SAM-binding methyltransferase superfamily. rRNA adenine N(6)-methyltransferase family. RsmA subfamily.

Its subcellular location is the cytoplasm. The enzyme catalyses adenosine(1518)/adenosine(1519) in 16S rRNA + 4 S-adenosyl-L-methionine = N(6)-dimethyladenosine(1518)/N(6)-dimethyladenosine(1519) in 16S rRNA + 4 S-adenosyl-L-homocysteine + 4 H(+). Specifically dimethylates two adjacent adenosines (A1518 and A1519) in the loop of a conserved hairpin near the 3'-end of 16S rRNA in the 30S particle. May play a critical role in biogenesis of 30S subunits. The polypeptide is Ribosomal RNA small subunit methyltransferase A (Blochmanniella floridana).